The sequence spans 160 residues: SsrA-binding protein (160 aa).

Belongs to the SmpB family.

It localises to the cytoplasm. Its function is as follows. Required for rescue of stalled ribosomes mediated by trans-translation. Binds to transfer-messenger RNA (tmRNA), required for stable association of tmRNA with ribosomes. tmRNA and SmpB together mimic tRNA shape, replacing the anticodon stem-loop with SmpB. tmRNA is encoded by the ssrA gene; the 2 termini fold to resemble tRNA(Ala) and it encodes a 'tag peptide', a short internal open reading frame. During trans-translation Ala-aminoacylated tmRNA acts like a tRNA, entering the A-site of stalled ribosomes, displacing the stalled mRNA. The ribosome then switches to translate the ORF on the tmRNA; the nascent peptide is terminated with the 'tag peptide' encoded by the tmRNA and targeted for degradation. The ribosome is freed to recommence translation, which seems to be the essential function of trans-translation. The polypeptide is SsrA-binding protein (Mannheimia succiniciproducens (strain KCTC 0769BP / MBEL55E)).